We begin with the raw amino-acid sequence, 467 residues long: Asparagine--tRNA ligase (467 aa).

This sequence belongs to the class-II aminoacyl-tRNA synthetase family. As to quaternary structure, homodimer.

It localises to the cytoplasm. It carries out the reaction tRNA(Asn) + L-asparagine + ATP = L-asparaginyl-tRNA(Asn) + AMP + diphosphate + H(+). This is Asparagine--tRNA ligase from Bacteroides fragilis (strain ATCC 25285 / DSM 2151 / CCUG 4856 / JCM 11019 / LMG 10263 / NCTC 9343 / Onslow / VPI 2553 / EN-2).